Consider the following 400-residue polypeptide: LIM homeobox transcription factor 1-beta.1 (400 aa).

LIM zinc-binding domains lie at 54–113 (AVCE…LFAA) and 114–175 (KCSG…EKDL). A disordered region spans residues 175–228 (LLSSGSPDDSDSVKSDDEEGDVKPGKGRVNQGKGSDDGKDPRRPKRPRTILTTQ). Positions 218 to 277 (PKRPRTILTTQQRRAFKASFEVSSKPCRKVRETLAAETGLSVRVVQVWFQNQRAKIKKLA) form a DNA-binding region, homeobox.

In terms of tissue distribution, shows a temporal expression pattern in three main areas: neural, kidney and limbs. From stage 13 onwards, expressed in regions of the nervous system including the placodes and otic vesicles, eye, specific sets of neurons, and in discreet regions of the neural tube. From stage 13, also expressed in the presumptive pronephros, and from stage 27 expression is predominant in the capsule of the pronephric glomus. Also expressed in the developing forelimbs and hindlimbs. In metamorphosing tadpoles, expressed in the eye, brain, muscle and mesonephric kidney.

It is found in the nucleus. Functionally, required for early specification of the kidney glomus, lying upstream of wt1 in the pathway controlling glomus differentiation. The balance in levels and expression patterns of binding partners such as lhx1/lim-1 influences differentiation into glomus or tubule derivatives. Involved in specification of serotonergic neurons. This Xenopus laevis (African clawed frog) protein is LIM homeobox transcription factor 1-beta.1.